A 468-amino-acid polypeptide reads, in one-letter code: Chromosomal replication initiator protein DnaA (468 aa).

Positions 1–84 (MSSSLWLQCL…RFEVGSRPVS (84 aa)) are domain I, interacts with DnaA modulators. Residues 80-106 (SRPVSAPKPAPTRTPADVAAESSAPAQ) are disordered. Positions 84 to 131 (SAPKPAPTRTPADVAAESSAPAQLQARKPVHKTWDDDPQAIAAINHRS) are domain II. Residues 132–348 (NMNPKHKFDN…GALNRVIANA (217 aa)) are domain III, AAA+ region. Residues glycine 176, glycine 178, lysine 179, and threonine 180 each coordinate ATP. The segment at 349 to 468 (NFTGRPITID…YSNLIRTLSS (120 aa)) is domain IV, binds dsDNA.

Belongs to the DnaA family. In terms of assembly, oligomerizes as a right-handed, spiral filament on DNA at oriC.

It is found in the cytoplasm. Plays an essential role in the initiation and regulation of chromosomal replication. ATP-DnaA binds to the origin of replication (oriC) to initiate formation of the DNA replication initiation complex once per cell cycle. Binds the DnaA box (a 9 base pair repeat at the origin) and separates the double-stranded (ds)DNA. Forms a right-handed helical filament on oriC DNA; dsDNA binds to the exterior of the filament while single-stranded (ss)DNA is stabiized in the filament's interior. The ATP-DnaA-oriC complex binds and stabilizes one strand of the AT-rich DNA unwinding element (DUE), permitting loading of DNA polymerase. After initiation quickly degrades to an ADP-DnaA complex that is not apt for DNA replication. Binds acidic phospholipids. The chain is Chromosomal replication initiator protein DnaA from Vibrio parahaemolyticus serotype O3:K6 (strain RIMD 2210633).